An 89-amino-acid chain; its full sequence is Small ribosomal subunit protein uS15 (89 aa).

It belongs to the universal ribosomal protein uS15 family. In terms of assembly, part of the 30S ribosomal subunit. Forms a bridge to the 50S subunit in the 70S ribosome, contacting the 23S rRNA.

Its function is as follows. One of the primary rRNA binding proteins, it binds directly to 16S rRNA where it helps nucleate assembly of the platform of the 30S subunit by binding and bridging several RNA helices of the 16S rRNA. Forms an intersubunit bridge (bridge B4) with the 23S rRNA of the 50S subunit in the ribosome. The sequence is that of Small ribosomal subunit protein uS15 from Edwardsiella ictaluri (strain 93-146).